A 932-amino-acid polypeptide reads, in one-letter code: MKIKDTLNLGKTAFPMRAGLPNKEPNWQKDWADATLYEKRQELNEGKPSFMLHDGPPYANGNIHLGHSLNKISKDIIVRYKSMAGFRAPYVPGWDTHGLPIEQQLAKAGMKRKEMDLLDYLEECRKYAMKQVDMQRSDFKSLGVLADWDRPYLTLLPEYEAAQIRVFGKMAEKGYIYKGQKPIYWSPSSESSLAEAEIEYQDVRSASIFVAFKAKDTKGKLPEDVEFVIWTTTPWTIPSNLGIFAHPDYDYSVVAVNGRKFVIASEMLEAVAEKLEWENPEVLQTIKGSELEYMVAKHPFYDRETLIMNADYVTLDSGTGLVHVAPGHGEDDYFASRKYKLPVLSPIDNRGYYTDEAPGLEGLLYDEGNKVVSKWLEEKDALLKLEFFTHSYPHDWRTKKPVIFRATPQWFASIDDFRQNILDEVERVDWVIPWGKTRLFNMVRDRGDWVISRQRAWGVPLPIFYGENGEPIITPETTEHVAKLFAEFGSKVWFEREAKDLLPEGFTHPASPNGEFTKEKDIMDVWFDSGSSWNGVLNERDYLSFPADLYLEGSDQYRGWFNSSITTSVAVNGVAPYKAVLSQGFVLDGKGRKMSKSIGNTIVPKDVTKKFGADILRLWVASIDTESDVRVSMDILSQVSEVYRKIRNTLRFLIANTSDFNPKEDAIDFAELRPVDKYMLVKFNELVKQIRTAYDNYSFMTVYKSIINFITNDLSSFYLDFAKDVVYIEAANSPERRSMQTVMYVILKDLVKILVPILPHTAEETWTYLEHEPENFAYLAEMPEAAEIPGSEELLGNWQEFLDFRDKILKALESAREAKLIGKSLEATVTIYPNEVVRTLLTAIDENVAQLLIVSNFVVANEPVNNAPESAMKFDDLAVLVEHAAGEVCDRCRRTDETVGHNANEHLKMLCEHCAHIVETEFPEILEEGFED.

The 'HIGH' region signature appears at 57–67; sequence PYANGNIHLGH. Glu552 serves as a coordination point for L-isoleucyl-5'-AMP. The 'KMSKS' region motif lies at 593 to 597; it reads KMSKS. ATP is bound at residue Lys596. Residues Cys889, Cys892, Cys911, and Cys914 each contribute to the Zn(2+) site.

This sequence belongs to the class-I aminoacyl-tRNA synthetase family. IleS type 1 subfamily. In terms of assembly, monomer. Zn(2+) serves as cofactor.

The protein resides in the cytoplasm. The enzyme catalyses tRNA(Ile) + L-isoleucine + ATP = L-isoleucyl-tRNA(Ile) + AMP + diphosphate. Functionally, catalyzes the attachment of isoleucine to tRNA(Ile). As IleRS can inadvertently accommodate and process structurally similar amino acids such as valine, to avoid such errors it has two additional distinct tRNA(Ile)-dependent editing activities. One activity is designated as 'pretransfer' editing and involves the hydrolysis of activated Val-AMP. The other activity is designated 'posttransfer' editing and involves deacylation of mischarged Val-tRNA(Ile). This Lactococcus lactis subsp. lactis (strain IL1403) (Streptococcus lactis) protein is Isoleucine--tRNA ligase.